Here is a 183-residue protein sequence, read N- to C-terminus: Shikimate kinase (183 aa).

Residue 19–24 (GAGKTT) participates in ATP binding. Position 23 (T23) interacts with Mg(2+). Residues D41, R65, and G87 each coordinate substrate. R124 is a binding site for ATP. R143 contributes to the substrate binding site.

The protein belongs to the shikimate kinase family. In terms of assembly, monomer. Mg(2+) serves as cofactor.

It is found in the cytoplasm. It catalyses the reaction shikimate + ATP = 3-phosphoshikimate + ADP + H(+). It functions in the pathway metabolic intermediate biosynthesis; chorismate biosynthesis; chorismate from D-erythrose 4-phosphate and phosphoenolpyruvate: step 5/7. Its function is as follows. Catalyzes the specific phosphorylation of the 3-hydroxyl group of shikimic acid using ATP as a cosubstrate. In Thermosynechococcus vestitus (strain NIES-2133 / IAM M-273 / BP-1), this protein is Shikimate kinase.